Reading from the N-terminus, the 306-residue chain is Curved DNA-binding protein (306 aa).

Residues 5 to 69 (DYYAIMGVKP…QRRAEYDQMW (65 aa)) form the J domain.

The protein resides in the cytoplasm. It localises to the nucleoid. DNA-binding protein that preferentially recognizes a curved DNA sequence. It is probably a functional analog of DnaJ; displays overlapping activities with DnaJ, but functions under different conditions, probably acting as a molecular chaperone in an adaptive response to environmental stresses other than heat shock. Lacks autonomous chaperone activity; binds native substrates and targets them for recognition by DnaK. Its activity is inhibited by the binding of CbpM. This is Curved DNA-binding protein from Escherichia coli (strain 55989 / EAEC).